A 374-amino-acid polypeptide reads, in one-letter code: tRNA N6-adenosine threonylcarbamoyltransferase (374 aa).

Fe cation is bound by residues His117 and His121. Substrate contacts are provided by residues 140–144, Asp174, Gly187, Asp191, and Asn283; that span reads LVSGG. Asp311 is a Fe cation binding site. The span at 337-352 shows a compositional bias: low complexity; sequence ADSSLPVTEPHVPGQG. Residues 337-374 are disordered; it reads ADSSLPVTEPHVPGQGHPHGHPHGHDHVHEVSKENLYS. Residues 359-374 show a composition bias toward basic and acidic residues; sequence HGHDHVHEVSKENLYS.

This sequence belongs to the KAE1 / TsaD family. Fe(2+) serves as cofactor.

The protein localises to the cytoplasm. It carries out the reaction L-threonylcarbamoyladenylate + adenosine(37) in tRNA = N(6)-L-threonylcarbamoyladenosine(37) in tRNA + AMP + H(+). Functionally, required for the formation of a threonylcarbamoyl group on adenosine at position 37 (t(6)A37) in tRNAs that read codons beginning with adenine. Is involved in the transfer of the threonylcarbamoyl moiety of threonylcarbamoyl-AMP (TC-AMP) to the N6 group of A37, together with TsaE and TsaB. TsaD likely plays a direct catalytic role in this reaction. The protein is tRNA N6-adenosine threonylcarbamoyltransferase of Streptomyces coelicolor (strain ATCC BAA-471 / A3(2) / M145).